The following is an 891-amino-acid chain: Microtubule-associated protein 10 (891 aa).

4 disordered regions span residues 325 to 355 (AAVQ…PPQI), 401 to 457 (EDKG…VTKG), 504 to 679 (SWKG…KSSC), and 702 to 844 (TTEN…SNLS). Positions 407 to 417 (PSTKSTSPSES) are enriched in low complexity. Polar residues-rich tracts occupy residues 509–520 (VSSSAAESQMSP) and 527–544 (PTDS…SQLP). Basic and acidic residues-rich tracts occupy residues 577–592 (STTK…KQEM) and 645–658 (TVDK…DGRQ). 5 stretches are compositionally biased toward polar residues: residues 665-679 (ADTS…KSSC), 702-718 (TTEN…SSTG), 726-749 (SRAS…SSVL), 776-790 (EASS…SQWT), and 826-844 (KSQS…SNLS).

As to quaternary structure, interacts (via middle region) with microtubules.

It is found in the cytoplasm. The protein localises to the cytoskeleton. The protein resides in the spindle pole. It localises to the microtubule organizing center. Its subcellular location is the centrosome. It is found in the midbody. Functionally, microtubule-associated protein (MAP) that plays a role in the regulation of cell division; promotes microtubule stability and participates in the organization of the spindle midzone and normal progress of cytokinesis. The sequence is that of Microtubule-associated protein 10 (Map10) from Mus musculus (Mouse).